Reading from the N-terminus, the 572-residue chain is Cytochrome P450 monooxygenase xilC (572 aa).

A heme-binding site is contributed by cysteine 515.

The protein belongs to the cytochrome P450 family. Heme is required as a cofactor.

It participates in secondary metabolite biosynthesis. Cytochrome P450 monooxygenase; part of the gene cluster that mediates the biosynthesis of the 6-methyl-2-pyrone derivative xylariolide D. XilC hydroxylates the 5-alkyl-6-methyl-2-pyrone backbone called prexylariolide D, produced by the highly reducing polyketide synthase xilA, on its side chain to form xylariolide D. In Penicillium rubens (strain ATCC 28089 / DSM 1075 / NRRL 1951 / Wisconsin 54-1255) (Penicillium chrysogenum), this protein is Cytochrome P450 monooxygenase xilC.